The chain runs to 1290 residues: Period circadian protein homolog 1 (1290 aa).

The disordered stretch occupies residues 1–134; sequence MSGPLEGADG…SSEQSARART (134 aa). The tract at residues 1-151 is interaction with BTRC; that stretch reads MSGPLEGADG…LRELKLRLPP (151 aa). The segment covering 25–38 has biased composition (pro residues); the sequence is VPSPGPPQHRPCPG. 2 stretches are compositionally biased toward low complexity: residues 48 to 57 and 64 to 115; these read NSNGSSGNES and GASQ…ASSE. The segment covering 116–132 has biased composition (polar residues); it reads QDNPSTSGCSSEQSARA. Thr121 is modified (phosphothreonine; by CSNK1E). A phosphoserine; by CSNK1E mark is found at Ser122 and Ser126. The Nuclear export signal 1 signature appears at 138–147; the sequence is LMTALRELKL. PAS domains are found at residues 208–275 and 348–414; these read ITSE…PSRL and YEAP…KILQ. A PAC domain is found at 422–465; sequence HSPIRFCARNGEYVTMDTSWAGFVHPWSRKVAFVLGRHKVRTAP. Residues 489–498 carry the Nuclear export signal 2 motif; that stretch reads LSEQIHRLLL. 2 disordered regions span residues 508–544 and 646–698; these read GLCG…PAPV and TTKR…KEPV. Low complexity-rich tracts occupy residues 517–533 and 652–662; these read SPGP…SNGG and ASSSSYTTSSA. Residues 596–815 are required for phosphorylation by CSNK1E; sequence ELEAGSAPVQ…GLDSSSTAPS (220 aa). A phosphoserine mark is found at Ser661, Ser663, and Ser704. Disordered regions lie at residues 749–772, 805–874, and 938–977; these read GLAP…APDA, RGLD…PPAT, and ALQT…FNSR. The segment covering 751-769 has biased composition (pro residues); the sequence is APGPAPSPAPSPTVAPDPA. Ser815 is modified (phosphoserine). The Nuclear localization signal motif lies at 827–843; it reads APPSRRHHCRSKAKRSR. The segment covering 830 to 847 has biased composition (basic residues); that stretch reads SRRHHCRSKAKRSRHHQN. The segment covering 860 to 874 has biased composition (pro residues); the sequence is SPVPPSTPWPTPPAT. Positions 950-961 are enriched in low complexity; the sequence is ASHSPSPSLPAL. A phosphoserine mark is found at Ser979 and Ser980. The Nuclear export signal 3 signature appears at 982–989; the sequence is LQLNLLQL. Positions 996-1037 are disordered; the sequence is EGAAVAGGPGSSAGPPPPSAEAAEPEARLAEVTESSNQDALS. The LXXLL signature appears at 1043 to 1047; sequence LELLL. Residues 1051–1062 show a composition bias toward low complexity; sequence SRSGTGSAASGS. 2 disordered regions span residues 1051-1098 and 1207-1290; these read SRSG…SKYF and SSTQ…NCTS. Positions 1063 to 1077 are enriched in gly residues; sequence LGSGLGSGSGSGSHE. The segment covering 1078 to 1095 has biased composition (low complexity); the sequence is GGSTSASITRSSQSSHTS. Positions 1149 to 1290 are CRY binding domain; sequence SRDMTSVLKQ…ALPTAGNCTS (142 aa). Over residues 1236 to 1248 the composition is skewed to gly residues; the sequence is GEQGSSGGGSGEG.

In terms of assembly, homodimer. Component of the circadian core oscillator, which includes the CRY proteins, CLOCK or NPAS2, BMAL1 or BMAL2, CSNK1D and/or CSNK1E, TIMELESS, and the PER proteins. Interacts directly with TIMELESS, PER2, PER3, CRY1 and CRY2. Interacts with BMAL1 and CLOCK. Interacts with GPRASP1. Interacts (phosphorylated) with BTRC and FBXW11; the interactions trigger proteasomal degradation. Interacts with NONO, WDR5 and SFPQ. Interacts with USP2. Interacts with HNF4A. In terms of processing, phosphorylated on serine residues by CSNK1D, CSNK1E and probably also by CSNK1G2. Phosphorylation by CSNK1D or CSNK1E promotes nuclear location of PER proteins as well as ubiquitination and subsequent degradation. May be dephosphorylated by PP1. Post-translationally, ubiquitinated; requires phosphorylation by CSNK1E and interaction with BTRC and FBXW11. Deubiquitinated by USP2. As to expression, widely expressed. Expressed in hair follicles (at protein level). Found in heart, brain, placenta, lung, liver, skeletal muscle, pancreas, kidney, spleen, thymus, prostate, testis, ovary and small intestine. Highest level in skeletal muscle.

It localises to the nucleus. The protein localises to the cytoplasm. Transcriptional repressor which forms a core component of the circadian clock. The circadian clock, an internal time-keeping system, regulates various physiological processes through the generation of approximately 24 hour circadian rhythms in gene expression, which are translated into rhythms in metabolism and behavior. It is derived from the Latin roots 'circa' (about) and 'diem' (day) and acts as an important regulator of a wide array of physiological functions including metabolism, sleep, body temperature, blood pressure, endocrine, immune, cardiovascular, and renal function. Consists of two major components: the central clock, residing in the suprachiasmatic nucleus (SCN) of the brain, and the peripheral clocks that are present in nearly every tissue and organ system. Both the central and peripheral clocks can be reset by environmental cues, also known as Zeitgebers (German for 'timegivers'). The predominant Zeitgeber for the central clock is light, which is sensed by retina and signals directly to the SCN. The central clock entrains the peripheral clocks through neuronal and hormonal signals, body temperature and feeding-related cues, aligning all clocks with the external light/dark cycle. Circadian rhythms allow an organism to achieve temporal homeostasis with its environment at the molecular level by regulating gene expression to create a peak of protein expression once every 24 hours to control when a particular physiological process is most active with respect to the solar day. Transcription and translation of core clock components (CLOCK, NPAS2, BMAL1, BMAL2, PER1, PER2, PER3, CRY1 and CRY2) plays a critical role in rhythm generation, whereas delays imposed by post-translational modifications (PTMs) are important for determining the period (tau) of the rhythms (tau refers to the period of a rhythm and is the length, in time, of one complete cycle). A diurnal rhythm is synchronized with the day/night cycle, while the ultradian and infradian rhythms have a period shorter and longer than 24 hours, respectively. Disruptions in the circadian rhythms contribute to the pathology of cardiovascular diseases, cancer, metabolic syndromes and aging. A transcription/translation feedback loop (TTFL) forms the core of the molecular circadian clock mechanism. Transcription factors, CLOCK or NPAS2 and BMAL1 or BMAL2, form the positive limb of the feedback loop, act in the form of a heterodimer and activate the transcription of core clock genes and clock-controlled genes (involved in key metabolic processes), harboring E-box elements (5'-CACGTG-3') within their promoters. The core clock genes: PER1/2/3 and CRY1/2 which are transcriptional repressors form the negative limb of the feedback loop and interact with the CLOCK|NPAS2-BMAL1|BMAL2 heterodimer inhibiting its activity and thereby negatively regulating their own expression. This heterodimer also activates nuclear receptors NR1D1/2 and RORA/B/G, which form a second feedback loop and which activate and repress BMAL1 transcription, respectively. Regulates circadian target genes expression at post-transcriptional levels, but may not be required for the repression at transcriptional level. Controls PER2 protein decay. Represses CRY2 preventing its repression on CLOCK/BMAL1 target genes such as FXYD5 and SCNN1A in kidney and PPARA in liver. Besides its involvement in the maintenance of the circadian clock, has an important function in the regulation of several processes. Participates in the repression of glucocorticoid receptor NR3C1/GR-induced transcriptional activity by reducing the association of NR3C1/GR to glucocorticoid response elements (GREs) by BMAL1:CLOCK. Plays a role in the modulation of the neuroinflammatory state via the regulation of inflammatory mediators release, such as CCL2 and IL6. In spinal astrocytes, negatively regulates the MAPK14/p38 and MAPK8/JNK MAPK cascades as well as the subsequent activation of NFkappaB. Coordinately regulates the expression of multiple genes that are involved in the regulation of renal sodium reabsorption. Can act as gene expression activator in a gene and tissue specific manner, in kidney enhances WNK1 and SLC12A3 expression in collaboration with CLOCK. Modulates hair follicle cycling. Represses the CLOCK-BMAL1 induced transcription of BHLHE40/DEC1. This chain is Period circadian protein homolog 1 (PER1), found in Homo sapiens (Human).